A 632-amino-acid chain; its full sequence is Threonine--tRNA ligase (632 aa).

A TGS domain is found at 1–59 (MIRITFLAKQKVEEYSSRVTGFDILQPDISKEAIALRVNGELYDLSREIESDTEIDVIQ). The catalytic stretch occupies residues 240–532 (DHRRIAKDMD…LIEHYAGKFP (293 aa)). Zn(2+)-binding residues include Cys332, His383, and His509.

This sequence belongs to the class-II aminoacyl-tRNA synthetase family. In terms of assembly, homodimer. Requires Zn(2+) as cofactor.

The protein localises to the cytoplasm. The enzyme catalyses tRNA(Thr) + L-threonine + ATP = L-threonyl-tRNA(Thr) + AMP + diphosphate + H(+). In terms of biological role, catalyzes the attachment of threonine to tRNA(Thr) in a two-step reaction: L-threonine is first activated by ATP to form Thr-AMP and then transferred to the acceptor end of tRNA(Thr). Also edits incorrectly charged L-seryl-tRNA(Thr). The protein is Threonine--tRNA ligase of Wolbachia sp. subsp. Brugia malayi (strain TRS).